Consider the following 692-residue polypeptide: Pentatricopeptide repeat-containing protein At2g04860 (692 aa).

17 PPR repeats span residues 12 to 46, 47 to 83, 84 to 114, 115 to 149, 150 to 184, 185 to 215, 216 to 250, 280 to 314, 316 to 345, 346 to 380, 381 to 411, 412 to 447, 448 to 482, 483 to 513, 514 to 548, 549 to 584, and 585 to 615; these read DLSY…SLTP, NHFT…GLDR, FVYV…MPER, DTVV…GFSP, SATT…GLEL, DSQV…MKDK, STVS…NVEI, DISV…SIVG, TSIV…CMKI, DAVA…GLCT, KTLV…LQET, PLIS…GLLP, DAIT…NFEN, ENFV…IKAP, CTAT…GLKP, DEIT…GISP, and TLQH…MDIK. Residues 620–692 form a type E motif; degenerate region; it reads VWGALLSACI…YDGYLGVSQI (73 aa).

It belongs to the PPR family. PCMP-E subfamily.

The chain is Pentatricopeptide repeat-containing protein At2g04860 (PCMP-E74) from Arabidopsis thaliana (Mouse-ear cress).